Here is a 126-residue protein sequence, read N- to C-terminus: C2H2-type zinc-finger transcription factor M5 (126 aa).

2 disordered regions span residues 17–52 (AQPDFEDWGDLGDLMPDVLPESNGSSSGTATDNDNR) and 103–126 (EKKSCNRVRRYSNGRERPRPRVKD). Residues 38–48 (SNGSSSGTATD) are compositionally biased toward polar residues. Residues 51-76 (NRCWDHGCNGKKFLNHSNLVRHRREN) form a C2H2-type 1; degenerate zinc finger. The segment at 83-115 (FTCPMCGAYFSRSTARNQHLEKKSCNRVRRYSN) adopts a C2H2-type 2; degenerate zinc-finger fold. The span at 115–126 (NGRERPRPRVKD) shows a compositional bias: basic and acidic residues.

This sequence belongs to the GLI C2H2-type zinc-finger protein family.

It localises to the nucleus. Functionally, transcription factor that probably regulates the expression of the gene cluster that mediates the biosynthesis of squalestatin S1 (SQS1, also known as zaragozic acid A), a heavily oxidized fungal polyketide that offers potent cholesterol lowering activity by targeting squalene synthase (SS). This Phoma sp. (strain ATCC 20986 / MF5453) protein is C2H2-type zinc-finger transcription factor M5.